A 171-amino-acid chain; its full sequence is Adenine phosphoribosyltransferase (171 aa).

This sequence belongs to the purine/pyrimidine phosphoribosyltransferase family. As to quaternary structure, homodimer.

It localises to the cytoplasm. The catalysed reaction is AMP + diphosphate = 5-phospho-alpha-D-ribose 1-diphosphate + adenine. It functions in the pathway purine metabolism; AMP biosynthesis via salvage pathway; AMP from adenine: step 1/1. Catalyzes a salvage reaction resulting in the formation of AMP, that is energically less costly than de novo synthesis. This Synechococcus sp. (strain ATCC 27144 / PCC 6301 / SAUG 1402/1) (Anacystis nidulans) protein is Adenine phosphoribosyltransferase.